The sequence spans 288 residues: N-acetylneuraminate lyase (288 aa).

Aceneuramate is bound by residues S44 and T45. Y133 functions as the Proton donor in the catalytic mechanism. The active-site Schiff-base intermediate with substrate is the K161. 5 residues coordinate aceneuramate: T163, G185, D187, E188, and S204.

The protein belongs to the DapA family. NanA subfamily. Homotetramer.

The protein resides in the cytoplasm. The enzyme catalyses aceneuramate = aldehydo-N-acetyl-D-mannosamine + pyruvate. Its pathway is amino-sugar metabolism; N-acetylneuraminate degradation; D-fructose 6-phosphate from N-acetylneuraminate: step 1/5. Catalyzes the reversible aldol cleavage of N-acetylneuraminic acid (sialic acid; Neu5Ac) to form pyruvate and N-acetylmannosamine (ManNAc) via a Schiff base intermediate. In Clostridium perfringens (strain SM101 / Type A), this protein is N-acetylneuraminate lyase.